Here is a 304-residue protein sequence, read N- to C-terminus: tRNA pseudouridine synthase B (304 aa).

Catalysis depends on Asp-41, which acts as the Nucleophile.

This sequence belongs to the pseudouridine synthase TruB family. Type 1 subfamily.

The catalysed reaction is uridine(55) in tRNA = pseudouridine(55) in tRNA. Responsible for synthesis of pseudouridine from uracil-55 in the psi GC loop of transfer RNAs. The polypeptide is tRNA pseudouridine synthase B (Nitratidesulfovibrio vulgaris (strain ATCC 29579 / DSM 644 / CCUG 34227 / NCIMB 8303 / VKM B-1760 / Hildenborough) (Desulfovibrio vulgaris)).